Consider the following 196-residue polypeptide: Vascular-related unknown protein 2 (196 aa).

Positions 84–130 (ANNINTNPKKRRIIHQHKEEEEEELQKGEEEEEDEEDTASSPSNKTK) are disordered. Acidic residues predominate over residues 103–121 (EEEEELQKGEEEEEDEEDT).

Functionally, involved in the regulation of plant growth. In Arabidopsis thaliana (Mouse-ear cress), this protein is Vascular-related unknown protein 2.